Here is a 204-residue protein sequence, read N- to C-terminus: General odorant-binding protein 67 (204 aa).

A signal peptide spans 1 to 22 (MNPVVCAFGVIFVVVTLELVVA). 3 disulfide bridges follow: Cys-57–Cys-85, Cys-81–Cys-147, and Cys-128–Cys-157.

Belongs to the PBP/GOBP family.

It is found in the secreted. Present in the aqueous fluid surrounding olfactory sensory dendrites and are thought to aid in the capture and transport of hydrophobic odorants into and through this fluid. The protein is General odorant-binding protein 67 (Obp67) of Anopheles gambiae (African malaria mosquito).